The sequence spans 545 residues: Carboxypeptidase Y homolog A (545 aa).

A signal peptide spans M1 to G18. Residues P19–K125 constitute a propeptide that is removed on maturation. 5 disulfide bridges follow: C179–C418, C313–C327, C337–C360, C344–C353, and C382–C388. N210 carries an N-linked (GlcNAc...) asparagine glycan. S266 is a catalytic residue. Residue D457 is part of the active site. N-linked (GlcNAc...) asparagine glycosylation is found at N487 and N507. Residue H518 is part of the active site.

The protein belongs to the peptidase S10 family.

Its subcellular location is the vacuole. It carries out the reaction Release of a C-terminal amino acid with broad specificity.. Vacuolar carboxypeptidase involved in degradation of small peptides. Digests preferentially peptides containing an aliphatic or hydrophobic residue in P1' position, as well as methionine, leucine or phenylalanine in P1 position of ester substrate. This Ajellomyces capsulatus (strain NAm1 / WU24) (Darling's disease fungus) protein is Carboxypeptidase Y homolog A (CPYA).